The following is a 66-amino-acid chain: Large ribosomal subunit protein bL35 (66 aa).

A compositionally biased stretch (basic residues) spans 1–16; the sequence is MPKMKTHKGSAKRFKK. The tract at residues 1–24 is disordered; sequence MPKMKTHKGSAKRFKKTGTGQLKR.

This sequence belongs to the bacterial ribosomal protein bL35 family.

The polypeptide is Large ribosomal subunit protein bL35 (Anoxybacillus flavithermus (strain DSM 21510 / WK1)).